A 152-amino-acid polypeptide reads, in one-letter code: Small ribosomal subunit protein uS15 (152 aa).

The segment covering 1-11 (MAKMHTKRKGK) has biased composition (basic residues). The disordered stretch occupies residues 1–22 (MAKMHTKRKGKSSSTRPIRTEP).

Belongs to the universal ribosomal protein uS15 family. Part of the 30S ribosomal subunit.

The polypeptide is Small ribosomal subunit protein uS15 (Methanosarcina barkeri (strain Fusaro / DSM 804)).